Consider the following 205-residue polypeptide: Regulator of G-protein signaling 4 (205 aa).

3 S-palmitoyl cysteine lipidation sites follow: Cys-2, Cys-12, and Cys-95. One can recognise an RGS domain in the interval 62–178; sequence SLENLISHEC…LKSRFYLDLV (117 aa).

Palmitoylated on Cys-2 and/or Cys-12. Post-translationally, phosphorylated by cyclic GMP-dependent protein kinase. As to expression, expressed in brain and heart. Expressed in brain at protein level. Expressed in prefontal and visual cortex. Isoform 4 and isoform 5 are expressed ubiquitously. Isoform 1, isoform 2 and isoform 3 are not expressed in the cerebellum.

Its function is as follows. Inhibits signal transduction by increasing the GTPase activity of G protein alpha subunits thereby driving them into their inactive GDP-bound form. Activity on G(z)-alpha is inhibited by phosphorylation of the G-protein. Activity on G(z)-alpha and G(i)-alpha-1 is inhibited by palmitoylation of the G-protein. The polypeptide is Regulator of G-protein signaling 4 (RGS4) (Homo sapiens (Human)).